A 155-amino-acid chain; its full sequence is Transcriptional regulator MraZ (155 aa).

2 consecutive SpoVT-AbrB domains span residues 15–62 and 93–136; these read TYEN…GMDR and SEEL…NPTA.

Belongs to the MraZ family. As to quaternary structure, forms oligomers.

The protein resides in the cytoplasm. The protein localises to the nucleoid. The polypeptide is Transcriptional regulator MraZ (Rhodospirillum rubrum (strain ATCC 11170 / ATH 1.1.1 / DSM 467 / LMG 4362 / NCIMB 8255 / S1)).